The sequence spans 68 residues: U-reduvitoxin-Pr3a (68 aa).

The signal sequence occupies residues 1–22; the sequence is MKAGMKLVLVLVIASIALLALA. 3 disulfide bridges follow: Cys-29/Cys-47, Cys-36/Cys-52, and Cys-46/Cys-59.

This sequence belongs to the venom Ptu1-like knottin family. As to expression, expressed by the venom gland.

The protein resides in the secreted. Its function is as follows. Binds reversibly and blocks P/Q-type voltage-gated calcium channels (Cav). The polypeptide is U-reduvitoxin-Pr3a (Platymeris rhadamanthus (Red spot assassin bug)).